A 96-amino-acid polypeptide reads, in one-letter code: Salivary protein FS50 (96 aa).

The N-terminal stretch at 1–19 (MKWILVLALVCLAVEYSYS) is a signal peptide. 4 disulfides stabilise this stretch: Cys26/Cys71, Cys50/Cys78, Cys63/Cys91, and Cys67/Cys93.

The protein localises to the secreted. Functionally, salivary protein that inhibits host voltage-gated sodium channel Nav1.5/SCN5A. In Xenopsylla cheopis (Oriental rat flea), this protein is Salivary protein FS50.